Reading from the N-terminus, the 267-residue chain is Tryptophan synthase alpha chain (267 aa).

Catalysis depends on proton acceptor residues Glu-49 and Asp-60.

It belongs to the TrpA family. As to quaternary structure, tetramer of two alpha and two beta chains.

It catalyses the reaction (1S,2R)-1-C-(indol-3-yl)glycerol 3-phosphate + L-serine = D-glyceraldehyde 3-phosphate + L-tryptophan + H2O. It functions in the pathway amino-acid biosynthesis; L-tryptophan biosynthesis; L-tryptophan from chorismate: step 5/5. The alpha subunit is responsible for the aldol cleavage of indoleglycerol phosphate to indole and glyceraldehyde 3-phosphate. This Solibacter usitatus (strain Ellin6076) protein is Tryptophan synthase alpha chain.